The chain runs to 247 residues: MSGHNKWSTIKHKKGAADAKRGKVFTKIIKEITVAAKLGGGDPDGNPRLRTAIDKAKGENMPKDNVERAIKKGVGGLEGTTYEETTYEGYGPGGTAVLVEVMTDNRNRTVSDVRSIFTKCNGNMGESGCVSWLFDKKGLLVFPKSIDFDKLFEASIEAGADDVTDEDEQYEVLTDPAAFHQVKTALEGAGFKAESAEITMIPQTMVKLEGKNAENMLKLMDRMEDNDDVQNVYANFDISEEEMEKMM.

It belongs to the TACO1 family.

The protein localises to the cytoplasm. In Citrifermentans bemidjiense (strain ATCC BAA-1014 / DSM 16622 / JCM 12645 / Bem) (Geobacter bemidjiensis), this protein is Probable transcriptional regulatory protein Gbem_3313.